Reading from the N-terminus, the 380-residue chain is Cytochrome b (380 aa).

4 helical membrane-spanning segments follow: residues 34-54 (FGSLLAMCLATQILTGLLLAM), 78-99 (WLIRNLHANGASFFFICIFLHI), 114-134 (WNTGVILLLTLMATAFVGYVL), and 179-199 (FFALHFLLPFVIAGITIIHLI). Heme b is bound by residues H84 and H98. Heme b is bound by residues H183 and H197. Residue H202 coordinates a ubiquinone. Helical transmembrane passes span 227-247 (LKDILGLTLMLTPLLTLALFS), 289-309 (LGGVLALAASVLILLLIPFLH), 321-341 (LSQTLFWLLVANLLVLTWVGS), and 348-368 (FIIIGQMASFSYFTILLILFP).

The protein belongs to the cytochrome b family. As to quaternary structure, the cytochrome bc1 complex contains 11 subunits: 3 respiratory subunits (MT-CYB, CYC1 and UQCRFS1), 2 core proteins (UQCRC1 and UQCRC2) and 6 low-molecular weight proteins (UQCRH/QCR6, UQCRB/QCR7, UQCRQ/QCR8, UQCR10/QCR9, UQCR11/QCR10 and a cleavage product of UQCRFS1). This cytochrome bc1 complex then forms a dimer. Heme b serves as cofactor.

The protein localises to the mitochondrion inner membrane. Component of the ubiquinol-cytochrome c reductase complex (complex III or cytochrome b-c1 complex) that is part of the mitochondrial respiratory chain. The b-c1 complex mediates electron transfer from ubiquinol to cytochrome c. Contributes to the generation of a proton gradient across the mitochondrial membrane that is then used for ATP synthesis. The sequence is that of Cytochrome b (MT-CYB) from Tragopan temminckii (Temminck's tragopan).